A 136-amino-acid chain; its full sequence is Small ribosomal subunit protein uS8c (136 aa).

The protein belongs to the universal ribosomal protein uS8 family. In terms of assembly, part of the 30S ribosomal subunit.

It localises to the plastid. The protein localises to the chloroplast. One of the primary rRNA binding proteins, it binds directly to 16S rRNA central domain where it helps coordinate assembly of the platform of the 30S subunit. In Saccharum hybrid (Sugarcane), this protein is Small ribosomal subunit protein uS8c (rps8).